The following is a 482-amino-acid chain: Chitobiosyldiphosphodolichol beta-mannosyltransferase (482 aa).

The Lumenal segment spans residues 1 to 2 (MA). The chain crosses the membrane as a helical span at residues 3–23 (ASCVALLVLALLLLVLLLGLW). Residues 24 to 99 (KRGRQTGRAR…DLRGLGAGPR (76 aa)) lie on the Cytoplasmic side of the membrane. The segment at residues 100 to 120 (ILQYGVKVVFQAVYLLWKMMR) is an intramembrane region (helical). The Cytoplasmic segment spans residues 121-482 (MDPAAYIFLQ…PCGHPSCRGF (362 aa)). S242 carries the phosphoserine modification.

It belongs to the glycosyltransferase group 1 family. Glycosyltransferase 33 subfamily.

It localises to the endoplasmic reticulum membrane. The catalysed reaction is an N,N'-diacetylchitobiosyl-diphospho-di-trans,poly-cis-dolichol + GDP-alpha-D-mannose = a beta-D-Man-(1-&gt;4)-beta-D-GlcNAc-(1-&gt;4)-alpha-D-GlcNAc-diphospho-di-trans,poly-cis-dolichol + GDP + H(+). The protein operates within protein modification; protein glycosylation. Its function is as follows. Mannosyltransferase that operates in the biosynthetic pathway of dolichol-linked oligosaccharides, the glycan precursors employed in protein asparagine (N)-glycosylation. The assembly of dolichol-linked oligosaccharides begins on the cytosolic side of the endoplasmic reticulum membrane and finishes in its lumen. The sequential addition of sugars to dolichol pyrophosphate produces dolichol-linked oligosaccharides containing fourteen sugars, including two GlcNAcs, nine mannoses and three glucoses. Once assembled, the oligosaccharide is transferred from the lipid to nascent proteins by oligosaccharyltransferases. Catalyzes, on the cytoplasmic face of the endoplasmic reticulum, the addition of the first mannose residues to the dolichol-linked oligosaccharide chain, to produce Man1GlcNAc(2)-PP-dolichol core oligosaccharide. Man1GlcNAc(2)-PP-dolichol is a substrate for ALG2, the following enzyme in the biosynthetic pathway. This chain is Chitobiosyldiphosphodolichol beta-mannosyltransferase, found in Mus musculus (Mouse).